A 137-amino-acid chain; its full sequence is Protein PsiE homolog (137 aa).

4 consecutive transmembrane segments (helical) span residues 15 to 35, 55 to 75, 82 to 102, and 108 to 128; these read LRIT…AFLI, YYMT…ALIV, FHFP…RFII, and ATST…LFLA.

This sequence belongs to the PsiE family.

Its subcellular location is the cell membrane. This chain is Protein PsiE homolog, found in Listeria innocua serovar 6a (strain ATCC BAA-680 / CLIP 11262).